Here is a 273-residue protein sequence, read N- to C-terminus: Endoplasmic reticulum resident protein 27 (273 aa).

A signal peptide spans 1-25 (MEAAPSRFMFLLFLLTCELAAEVAA). The region spanning 39 to 152 (EPTWLTDVPA…MVTEYNPVTV (114 aa)) is the Thioredoxin domain. An N-linked (GlcNAc...) asparagine glycan is attached at N100. The PDIA3-binding site stretch occupies residues 230–233 (DEWD). Positions 270–273 (KVEL) match the Prevents secretion from ER motif.

The protein belongs to the protein disulfide isomerase family. In terms of assembly, interacts with PDIA3.

It is found in the endoplasmic reticulum lumen. Its function is as follows. Specifically binds unfolded proteins and may recruit protein disulfide isomerase PDIA3 to unfolded substrates. Binds protein substrates via a hydrophobic pocket in the C-terminal domain. May play a role in the unfolded stress response. The protein is Endoplasmic reticulum resident protein 27 (ERP27) of Homo sapiens (Human).